The primary structure comprises 325 residues: Tetraacyldisaccharide 4'-kinase (325 aa).

Position 58–65 (58–65 (TVGGSGKT)) interacts with ATP.

The protein belongs to the LpxK family.

The enzyme catalyses a lipid A disaccharide + ATP = a lipid IVA + ADP + H(+). It participates in glycolipid biosynthesis; lipid IV(A) biosynthesis; lipid IV(A) from (3R)-3-hydroxytetradecanoyl-[acyl-carrier-protein] and UDP-N-acetyl-alpha-D-glucosamine: step 6/6. Functionally, transfers the gamma-phosphate of ATP to the 4'-position of a tetraacyldisaccharide 1-phosphate intermediate (termed DS-1-P) to form tetraacyldisaccharide 1,4'-bis-phosphate (lipid IVA). This is Tetraacyldisaccharide 4'-kinase from Coxiella burnetii (strain Dugway 5J108-111).